Reading from the N-terminus, the 407-residue chain is tRNA(Ile)-lysidine synthase (407 aa).

36–41 lines the ATP pocket; it reads SGGRDS.

The protein belongs to the tRNA(Ile)-lysidine synthase family.

It localises to the cytoplasm. The catalysed reaction is cytidine(34) in tRNA(Ile2) + L-lysine + ATP = lysidine(34) in tRNA(Ile2) + AMP + diphosphate + H(+). In terms of biological role, ligates lysine onto the cytidine present at position 34 of the AUA codon-specific tRNA(Ile) that contains the anticodon CAU, in an ATP-dependent manner. Cytidine is converted to lysidine, thus changing the amino acid specificity of the tRNA from methionine to isoleucine. This is tRNA(Ile)-lysidine synthase from Tropheryma whipplei (strain TW08/27) (Whipple's bacillus).